Consider the following 1368-residue polypeptide: DNA-directed RNA polymerase subunit beta (1368 aa).

This sequence belongs to the RNA polymerase beta chain family. In terms of assembly, the RNAP catalytic core consists of 2 alpha, 1 beta, 1 beta' and 1 omega subunit. When a sigma factor is associated with the core the holoenzyme is formed, which can initiate transcription.

It catalyses the reaction RNA(n) + a ribonucleoside 5'-triphosphate = RNA(n+1) + diphosphate. In terms of biological role, DNA-dependent RNA polymerase catalyzes the transcription of DNA into RNA using the four ribonucleoside triphosphates as substrates. This Burkholderia cenocepacia (strain HI2424) protein is DNA-directed RNA polymerase subunit beta.